Consider the following 205-residue polypeptide: N-(5'-phosphoribosyl)anthranilate isomerase (205 aa).

This sequence belongs to the TrpF family.

The catalysed reaction is N-(5-phospho-beta-D-ribosyl)anthranilate = 1-(2-carboxyphenylamino)-1-deoxy-D-ribulose 5-phosphate. The protein operates within amino-acid biosynthesis; L-tryptophan biosynthesis; L-tryptophan from chorismate: step 3/5. The protein is N-(5'-phosphoribosyl)anthranilate isomerase of Acidithiobacillus ferrooxidans (strain ATCC 23270 / DSM 14882 / CIP 104768 / NCIMB 8455) (Ferrobacillus ferrooxidans (strain ATCC 23270)).